A 93-amino-acid chain; its full sequence is DNA-binding protein Fis (93 aa).

The segment at residues 74-93 (QTRAAQMMGINRGTLRKKLK) is a DNA-binding region (H-T-H motif).

This sequence belongs to the transcriptional regulatory Fis family. Homodimer.

Its function is as follows. Activates ribosomal RNA transcription. Plays a direct role in upstream activation of rRNA promoters. This Proteus vulgaris protein is DNA-binding protein Fis.